We begin with the raw amino-acid sequence, 641 residues long: MELKGVQPSNGSANGNGTTNAASTEKADTEKQTAERTNWGNGLEFLMSCISVSVGLGNVWRFPFTAYENGGGAFLIPYIIVLFLIGKPMYYLEMIMGQFTSQGTVKIWSVVPGFVGVGYGQAFGTICIISYYSSLLALTLYYLFVSFQSELPWSYCRDEWTNCVNSRPQEYVDNLLTGVSLANESARNLSGIGFVANDETEKLQSSSELYFLNVVIKEKLDISDGVGDPDWKLTLALFVAWVVIFLVIMRGVKSSGKAAYFLALFPYVVLFVLLIRAVTLEGARDGILFFLEPQWGELLNPTVWKEAVVQCFFSLAVGSGPIIMFASYNRFDHGIYRDAMIVTTLDTLTSLLGGITIFAILGNLAHNLQIENIRDVVRSGTGLAFISYPDAISKFQAVPQLFSVLFFFMLFVLGIGSIVALQSTIVTIICDQFKGLKYWKVALITSACGFLMGLVYVTPGGQWILTLVDFYGGTYVVFILAIFELAGIVWVYGLQNFCDDIEFMCNRRVSLYWRMCWSFFTPVMMIIIFIYSMATIEPIKYSELYFPEAANIAGWLLFAIGAAQFPLWGLWYASTHPQGTYWKSLKASLKPSDRWGPANPETRREWVIFKNQKAAQRATQKSTSKLGFFWRKLTNFCGSNK.

Positions 1–34 (MELKGVQPSNGSANGNGTTNAASTEKADTEKQTA) are disordered. Residues 1–38 (MELKGVQPSNGSANGNGTTNAASTEKADTEKQTAERTN) are Cytoplasmic-facing. The span at 9–24 (SNGSANGNGTTNAAST) shows a compositional bias: low complexity. Residues 25–34 (EKADTEKQTA) are compositionally biased toward basic and acidic residues. The next 3 membrane-spanning stretches (helical) occupy residues 39-59 (WGNG…LGNV), 72-92 (GAFL…MYYL), and 109-129 (SVVP…ICII). 2 N-linked (GlcNAc...) asparagine glycosylation sites follow: asparagine 183 and asparagine 188. 9 helical membrane passes run 229–249 (PDWK…LVIM), 258–278 (AAYF…IRAV), 307–327 (AVVQ…MFAS), 341–361 (IVTT…FAIL), 401–421 (LFSV…IVAL), 441–461 (VALI…TPGG), 474–494 (TYVV…VYGL), 516–536 (CWSF…MATI), and 552–572 (IAGW…GLWY).

This sequence belongs to the sodium:neurotransmitter symporter (SNF) (TC 2.A.22) family.

The protein localises to the membrane. Its function is as follows. Unusual broad substrate spectrum amino acid:sodium cotransporter that promotes absorption of the D isomers of essential amino acids. Neutral amino acids are the preferred substrates, especially methionine and phenylalanine. The chain is Sodium-dependent nutrient amino acid transporter 1 from Drosophila yakuba (Fruit fly).